We begin with the raw amino-acid sequence, 490 residues long: MELLRPALPSYFLLTLLSIWTAASEARAVSTGMPTISAASFLQNLMHRYGEGDSLTLQQLKALLNHLDVGVGRGNISQPVQGPRNLSTCFSSGELFAAHNLSHQSQIGEREFQEFCPTILQQLDSRACSSENQENEENEQTEEGRPSSVEVWGYGLLCVTVISLCSLLGASVVPFMKKTFYKRLLLYFIALAIGTLYSNALFQLIPEAFGFNPMEDYYVSKSAVVFGGFYLFFFTEKILKMLLKQKNEHHHGHSHYTSETLPSQKDQEEGVTEKLQNGDLDHMIPQHCSGELDGKTPVVDEKVIVGSLSVQDLQASQSACHWLKGVRYSDIGTLAWMITLSDGLHNFIDGLAIGASFTVSVFQGISTSVAILCEEFPHELGDFVILLNAGMSLQQALFFNFLSACCCYVGLGFGILAGSHFSANWIFALAGGMFLYISLADMFPEMNEVSQEDERKGSALIPFVIQNLGLLTGFGIMLVLTMYSGHIQIG.

A signal peptide spans 1–28; it reads MELLRPALPSYFLLTLLSIWTAASEARA. The Extracellular segment spans residues 29-155; sequence VSTGMPTISA…PSSVEVWGYG (127 aa). N-linked (GlcNAc...) asparagine glycans are attached at residues Asn-75, Asn-85, and Asn-100. The disordered stretch occupies residues 127–146; that stretch reads ACSSENQENEENEQTEEGRP. Residues 156 to 176 traverse the membrane as a helical segment; it reads LLCVTVISLCSLLGASVVPFM. At 177 to 184 the chain is on the cytoplasmic side; that stretch reads KKTFYKRL. Residues 185 to 205 form a helical membrane-spanning segment; it reads LLYFIALAIGTLYSNALFQLI. The Extracellular portion of the chain corresponds to 206–222; sequence PEAFGFNPMEDYYVSKS. A helical membrane pass occupies residues 223–243; that stretch reads AVVFGGFYLFFFTEKILKMLL. The Cytoplasmic portion of the chain corresponds to 244–395; it reads KQKNEHHHGH…LLNAGMSLQQ (152 aa). The HHHGHXHX-motif signature appears at 249–256; it reads HHHGHSHY. An XEXPHE-motif motif is present at residues 374 to 379; it reads EEFPHE. Residues 396–416 traverse the membrane as a helical segment; it reads ALFFNFLSACCCYVGLGFGIL. At 417 to 422 the chain is on the extracellular side; sequence AGSHFS. The helical transmembrane segment at 423–443 threads the bilayer; it reads ANWIFALAGGMFLYISLADMF. Residues 444–459 are Cytoplasmic-facing; sequence PEMNEVSQEDERKGSA. A helical transmembrane segment spans residues 460–480; it reads LIPFVIQNLGLLTGFGIMLVL. Topologically, residues 481–490 are extracellular; it reads TMYSGHIQIG.

The protein belongs to the ZIP transporter (TC 2.A.5) family. Homotrimer. In terms of processing, ubiquitinated. Ubiquitination occurs upon iron depletion. The ubiquitinated form undergoes proteasomal degradation. Post-translationally, N-glycosylated. N-glycosylation at Asn-100 is required for iron-regulated extraction of the transporter from membranes and subsequent proteasomal degradation.

Its subcellular location is the cell membrane. The protein resides in the apical cell membrane. The protein localises to the basolateral cell membrane. It localises to the early endosome membrane. It is found in the late endosome membrane. Its subcellular location is the lysosome membrane. It carries out the reaction Zn(2+)(out) + 2 hydrogencarbonate(out) = Zn(2+)(in) + 2 hydrogencarbonate(in). It catalyses the reaction Mn(2+)(out) + 2 hydrogencarbonate(out) = Mn(2+)(in) + 2 hydrogencarbonate(in). The catalysed reaction is Fe(2+)(out) + 2 hydrogencarbonate(out) = Fe(2+)(in) + 2 hydrogencarbonate(in). The enzyme catalyses Cd(2+)(out) + 2 hydrogencarbonate(out) = Cd(2+)(in) + 2 hydrogencarbonate(in). In terms of biological role, electroneutral transporter of the plasma membrane mediating the cellular uptake of the divalent metal cations zinc, manganese and iron that are important for tissue homeostasis, metabolism, development and immunity. Functions as an energy-dependent symporter, transporting through the membranes an electroneutral complex composed of a divalent metal cation and two bicarbonate anions. Beside these endogenous cellular substrates, can also import cadmium a non-essential metal which is cytotoxic and carcinogenic. The sequence is that of Metal cation symporter ZIP14 from Bos taurus (Bovine).